The primary structure comprises 88 residues: Small ribosomal subunit protein uS17 (88 aa).

The protein belongs to the universal ribosomal protein uS17 family. In terms of assembly, part of the 30S ribosomal subunit.

One of the primary rRNA binding proteins, it binds specifically to the 5'-end of 16S ribosomal RNA. The protein is Small ribosomal subunit protein uS17 of Nitratidesulfovibrio vulgaris (strain ATCC 29579 / DSM 644 / CCUG 34227 / NCIMB 8303 / VKM B-1760 / Hildenborough) (Desulfovibrio vulgaris).